Here is a 373-residue protein sequence, read N- to C-terminus: Cobalt-precorrin-5B C(1)-methyltransferase (373 aa).

It belongs to the CbiD family.

The catalysed reaction is Co-precorrin-5B + S-adenosyl-L-methionine = Co-precorrin-6A + S-adenosyl-L-homocysteine. Its pathway is cofactor biosynthesis; adenosylcobalamin biosynthesis; cob(II)yrinate a,c-diamide from sirohydrochlorin (anaerobic route): step 6/10. Its function is as follows. Catalyzes the methylation of C-1 in cobalt-precorrin-5B to form cobalt-precorrin-6A. This is Cobalt-precorrin-5B C(1)-methyltransferase from Halorhodospira halophila (strain DSM 244 / SL1) (Ectothiorhodospira halophila (strain DSM 244 / SL1)).